Reading from the N-terminus, the 419-residue chain is D-galactonate dehydratase family member SEN1436 (419 aa).

Substrate-binding residues include glutamine 45 and histidine 129. Tyrosine 160 (proton donor/acceptor) is an active-site residue. Residue aspartate 225 coordinates Mg(2+). Histidine 227 functions as the Proton donor/acceptor in the catalytic mechanism. Mg(2+) contacts are provided by glutamate 251 and glutamate 277. Residues glutamate 277, arginine 298, histidine 327, aspartate 331, and glutamate 354 each contribute to the substrate site.

This sequence belongs to the mandelate racemase/muconate lactonizing enzyme family. GalD subfamily. Homotetramer. Mg(2+) serves as cofactor.

The enzyme catalyses D-gluconate = 2-dehydro-3-deoxy-D-gluconate + H2O. Has low D-gluconate dehydratase activity (in vitro), suggesting that it has no significant role in D-gluconate degradation in vivo. Has no detectable activity with a panel of 70 other acid sugars (in vitro). In Salmonella enteritidis PT4 (strain P125109), this protein is D-galactonate dehydratase family member SEN1436.